The sequence spans 658 residues: Probable mitochondrial Rho GTPase gemA (658 aa).

Topologically, residues 1–633 are cytoplasmic; the sequence is MKNNIKVILI…NGSNGSNNSN (633 aa). Residues 2-175 form the Miro 1 domain; sequence KNNIKVILIG…LYASQTSVFF (174 aa). Residues 11–18, 57–62, and 118–121 contribute to the GTP site; these read GDEQVGKS, DTFDDG, and NKLD. 2 EF-hand domains span residues 191–226 and 311–346; these read GCER…CGHE and MGNE…TPKI. Residues Asp-204, Asp-206, Asp-208, Ser-210, Glu-215, Asp-324, Asp-326, Asp-328, and Asp-335 each contribute to the Ca(2+) site. Residues 420–616 enclose the Miro 2 domain; sequence RNIVNCYVFG…YHEMMETIVN (197 aa). GTP is bound by residues 429–436, 466–468, and 530–533; these read GAEAVGKT, LLK, and TKNN. The disordered stretch occupies residues 532–575; sequence NNNNNNNNNNNNNNNNNNNNLNNNNNNINNNNNNNNNNTTTTNA. A helical; Anchor for type IV membrane protein membrane pass occupies residues 634–656; it reads ILTYLVIAAGVAGVGLLLSKYLA. Over 657 to 658 the chain is Mitochondrial intermembrane; it reads KK.

This sequence belongs to the mitochondrial Rho GTPase family.

The protein localises to the mitochondrion outer membrane. Functionally, mitochondrial GTPase involved in mitochondrial trafficking. Probably involved in control of anterograde transport of mitochondria and their subcellular distribution. The polypeptide is Probable mitochondrial Rho GTPase gemA (gemA) (Dictyostelium discoideum (Social amoeba)).